A 660-amino-acid chain; its full sequence is DNA ligase (660 aa).

Residues 33-37, 82-83, and E110 contribute to the NAD(+) site; these read DFVYD and SL. Residue K112 is the N6-AMP-lysine intermediate of the active site. NAD(+) is bound by residues R133, E167, K281, and K305. C396, C399, C412, and C417 together coordinate Zn(2+). Residues 583 to 660 enclose the BRCT domain; sequence DENKLLVGKK…SFEDIKSYLD (78 aa).

The protein belongs to the NAD-dependent DNA ligase family. LigA subfamily. It depends on Mg(2+) as a cofactor. Mn(2+) serves as cofactor.

The catalysed reaction is NAD(+) + (deoxyribonucleotide)n-3'-hydroxyl + 5'-phospho-(deoxyribonucleotide)m = (deoxyribonucleotide)n+m + AMP + beta-nicotinamide D-nucleotide.. Its function is as follows. DNA ligase that catalyzes the formation of phosphodiester linkages between 5'-phosphoryl and 3'-hydroxyl groups in double-stranded DNA using NAD as a coenzyme and as the energy source for the reaction. It is essential for DNA replication and repair of damaged DNA. This chain is DNA ligase, found in Borreliella afzelii (strain PKo) (Borrelia afzelii).